Reading from the N-terminus, the 161-residue chain is N5-carboxyaminoimidazole ribonucleotide mutase (161 aa).

Substrate contacts are provided by serine 9, aspartate 12, and arginine 39.

The protein belongs to the AIR carboxylase family. Class I subfamily.

It carries out the reaction 5-carboxyamino-1-(5-phospho-D-ribosyl)imidazole + H(+) = 5-amino-1-(5-phospho-D-ribosyl)imidazole-4-carboxylate. It functions in the pathway purine metabolism; IMP biosynthesis via de novo pathway; 5-amino-1-(5-phospho-D-ribosyl)imidazole-4-carboxylate from 5-amino-1-(5-phospho-D-ribosyl)imidazole (N5-CAIR route): step 2/2. Its function is as follows. Catalyzes the conversion of N5-carboxyaminoimidazole ribonucleotide (N5-CAIR) to 4-carboxy-5-aminoimidazole ribonucleotide (CAIR). This chain is N5-carboxyaminoimidazole ribonucleotide mutase, found in Vibrio parahaemolyticus serotype O3:K6 (strain RIMD 2210633).